The following is a 349-amino-acid chain: Hydrophobic dipeptide epimerase (349 aa).

Residues threonine 127 and 153 to 155 each bind substrate; that span reads KIK. The Mg(2+) site is built by aspartate 186, glutamate 212, and aspartate 237. Substrate-binding positions include lysine 259 and 309–311; that span reads DLD.

It belongs to the mandelate racemase/muconate lactonizing enzyme family. Mg(2+) serves as cofactor.

In terms of biological role, catalyzes the epimerization a variety of hydrophobic dipeptides. Epimerase activity is highest with L-Ala-L-Tyr, and lower with L-Ala-L-Met, L-Ala-L-Phe, L-Tyr-L-Ala, L-Tyr-L-Met and L-Tyr-L-Trp (in vitro). In Flavobacteria bacterium (strain MS024-2A), this protein is Hydrophobic dipeptide epimerase.